Here is a 161-residue protein sequence, read N- to C-terminus: MDDIYKAAVEQLTEEQKNEFKAAFDIFVLGAEDGCISTKELGKVMRMLGQNPTPEELQEMIDEVDEDGSGTVDFDQFLVMMVRCMKDDSKGKTEEELSDLFRMFDKNADGYIDLEELKIMLQATGETITEDDIEELMKDGNKNNDGRIDYDEFLQFMKGVE.

Methionine 1 carries the N-acetylmethionine modification. 4 consecutive EF-hand domains span residues 16–51 (QKNE…LGQN), 52–87 (PTPE…CMKD), 92–127 (KTEE…TGET), and 128–161 (ITED…KGVE). Ca(2+) contacts are provided by aspartate 65, aspartate 67, serine 69, threonine 71, aspartate 105, asparagine 107, aspartate 109, tyrosine 111, glutamate 116, asparagine 143, aspartate 145, arginine 147, and glutamate 152.

Belongs to the troponin C family.

In terms of biological role, troponin is the central regulatory protein of striated muscle contraction. Tn consists of three components: Tn-I which is the inhibitor of actomyosin ATPase, Tn-T which contains the binding site for tropomyosin and Tn-C. The binding of calcium to Tn-C abolishes the inhibitory action of Tn on actin filaments. The chain is Troponin C, slow skeletal and cardiac muscles (TNNC1) from Coturnix japonica (Japanese quail).